Consider the following 246-residue polypeptide: Tyrosine recombinase XerD-like (246 aa).

The Core-binding (CB) domain maps to 1–72; that stretch reads MINDINNFIE…AVNQFLFFLY (72 aa). The Tyr recombinase domain occupies 84–246; it reads QETEKITLAQ…TPITLERYYR (163 aa). Active-site residues include Lys-149 and Arg-212. Tyr-244 functions as the O-(3'-phospho-DNA)-tyrosine intermediate in the catalytic mechanism.

The protein belongs to the 'phage' integrase family. XerD-like subfamily.

Its subcellular location is the cytoplasm. Putative tyrosine recombinase. Not involved in the cutting and rejoining of the recombining DNA molecules on dif(SL) site. This Streptococcus agalactiae serotype V (strain ATCC BAA-611 / 2603 V/R) protein is Tyrosine recombinase XerD-like.